We begin with the raw amino-acid sequence, 377 residues long: N5-carboxyaminoimidazole ribonucleotide synthase (377 aa).

ATP contacts are provided by residues R93, K133, 138–144 (GYDGRGQ), 175–178 (EEFV), E183, H206, and 257–258 (NE). Residues 97–287 (KTLLDHAGVR…QFENHLRAVC (191 aa)) form the ATP-grasp domain.

This sequence belongs to the PurK/PurT family. Homodimer.

It catalyses the reaction 5-amino-1-(5-phospho-beta-D-ribosyl)imidazole + hydrogencarbonate + ATP = 5-carboxyamino-1-(5-phospho-D-ribosyl)imidazole + ADP + phosphate + 2 H(+). It participates in purine metabolism; IMP biosynthesis via de novo pathway; 5-amino-1-(5-phospho-D-ribosyl)imidazole-4-carboxylate from 5-amino-1-(5-phospho-D-ribosyl)imidazole (N5-CAIR route): step 1/2. Functionally, catalyzes the ATP-dependent conversion of 5-aminoimidazole ribonucleotide (AIR) and HCO(3)(-) to N5-carboxyaminoimidazole ribonucleotide (N5-CAIR). The protein is N5-carboxyaminoimidazole ribonucleotide synthase of Vibrio vulnificus (strain YJ016).